A 565-amino-acid polypeptide reads, in one-letter code: Anaphase-promoting complex subunit 7 (565 aa).

TPR repeat units follow at residues 101 to 134 (EIEV…RQRT), 169 to 202 (LDAI…LDWL), 203 to 236 (SVWI…LRDN), 237 to 270 (VDLL…DPYL), 339 to 372 (VQAL…APCR), 373 to 406 (LDCY…LGAN), 407 to 441 (AQTL…RPDY), 442 to 474 (IKAV…NQSD), 475 to 508 (CVLH…DPND), and 509 to 531 (QKSL…TQEE). At Lys229 the chain carries N6-acetyllysine. Residues 513–523 (EGMQKMEKEES) show a composition bias toward basic and acidic residues. The segment at 513 to 565 (EGMQKMEKEESPTDATQEEDVDDMEGSGEEGDLEGSDSEAAQWADQEQWFGMQ) is disordered. Over residues 528 to 549 (TQEEDVDDMEGSGEEGDLEGSD) the composition is skewed to acidic residues.

Belongs to the APC7 family. In terms of assembly, V-shaped homodimer. The mammalian APC/C is composed at least of 14 distinct subunits ANAPC1, ANAPC2, CDC27/APC3, ANAPC4, ANAPC5, CDC16/APC6, ANAPC7, CDC23/APC8, ANAPC10, ANAPC11, CDC26/APC12, ANAPC13, ANAPC15 and ANAPC16 that assemble into a complex of at least 19 chains with a combined molecular mass of around 1.2 MDa; APC/C interacts with FZR1 and FBXO5.

It is found in the cytoplasm. The protein resides in the cytoskeleton. It localises to the nucleus. Its subcellular location is the spindle. Its pathway is protein modification; protein ubiquitination. Component of the anaphase promoting complex/cyclosome (APC/C), a cell cycle-regulated E3 ubiquitin ligase that controls progression through mitosis and the G1 phase of the cell cycle. The APC/C complex acts by mediating ubiquitination and subsequent degradation of target proteins: it mainly mediates the formation of 'Lys-11'-linked polyubiquitin chains and, to a lower extent, the formation of 'Lys-48'- and 'Lys-63'-linked polyubiquitin chains. The APC/C complex catalyzes assembly of branched 'Lys-11'-/'Lys-48'-linked branched ubiquitin chains on target proteins. APC7 is not required for the assembly of the APC/C complex, but has an enzyme-substrate adapter activity mediating the processive ubiquitination of specific substrates. Involved in brain development through the specific ubiquitination and clearance of MKI67 from constitutive heterochromatin after neuronal progenitors exit mitosis. This chain is Anaphase-promoting complex subunit 7, found in Homo sapiens (Human).